Consider the following 603-residue polypeptide: Myotubularin (603 aa).

Positions 1–13 (MASASTSKYNSHS) are enriched in polar residues. The disordered stretch occupies residues 1–25 (MASASTSKYNSHSLENESIKRTSRD). 2 positions are modified to phosphoserine: serine 13 and serine 18. Residues 14–25 (LENESIKRTSRD) show a composition bias toward basic and acidic residues. The GRAM domain maps to 29-97 (RDLTEAVPRL…GVISRIEKMG (69 aa)). A Myotubularin phosphatase domain is found at 163 to 538 (GWTVYNPVEE…RHLELWVNYY (376 aa)). A 1,2-diacyl-sn-glycero-3-phospho-(1D-myo-inositol-3,5-bisphosphate)-binding residues include asparagine 288, asparagine 313, and isoleucine 314. A 1,2-diacyl-sn-glycero-3-phospho-(1D-myo-inositol-3-phosphate)-binding residues include asparagine 288, asparagine 313, and isoleucine 314. Cysteine 375 (phosphocysteine intermediate) is an active-site residue. A 1,2-diacyl-sn-glycero-3-phospho-(1D-myo-inositol-3,5-bisphosphate) contacts are provided by serine 376, aspartate 377, glycine 378, tryptophan 379, aspartate 380, arginine 381, lysine 417, and arginine 421. Positions 376, 377, 378, 379, 380, and 381 each coordinate a 1,2-diacyl-sn-glycero-3-phospho-(1D-myo-inositol-3-phosphate). Arginine 421 serves as a coordination point for a 1,2-diacyl-sn-glycero-3-phospho-(1D-myo-inositol-3-phosphate). Threonine 495 is modified (phosphothreonine). The disordered stretch occupies residues 579 to 603 (SAKLSDPPTSPSSPSQMMPHVQTHF). Serine 588 carries the post-translational modification Phosphoserine.

This sequence belongs to the protein-tyrosine phosphatase family. Non-receptor class myotubularin subfamily. As to quaternary structure, heterodimer with MTMR12. Interacts with KMT2A/MLL1 (via SET domain). Interacts with DES in skeletal muscle but not in cardiac muscle. Interacts with SPEG.

It is found in the cytoplasm. It localises to the cell membrane. Its subcellular location is the cell projection. The protein localises to the filopodium. The protein resides in the ruffle. It is found in the late endosome. It localises to the myofibril. Its subcellular location is the sarcomere. It catalyses the reaction a 1,2-diacyl-sn-glycero-3-phospho-(1D-myo-inositol-3-phosphate) + H2O = a 1,2-diacyl-sn-glycero-3-phospho-(1D-myo-inositol) + phosphate. The catalysed reaction is a 1,2-diacyl-sn-glycero-3-phospho-(1D-myo-inositol-3,5-bisphosphate) + H2O = a 1,2-diacyl-sn-glycero-3-phospho-(1D-myo-inositol-5-phosphate) + phosphate. The enzyme catalyses 1,2-dioctanoyl-sn-glycero-3-phospho-(1-D-myo-inositol-3-phosphate) + H2O = 1,2-dioctanoyl-sn-glycero-3-phospho-(1D-myo-inositol) + phosphate. It carries out the reaction 1,2-dioctanoyl-sn-glycero-3-phospho-(1D-myo-inositol-3,5-bisphosphate) + H2O = 1,2-dioctanoyl-sn-glycero-3-phospho-(1D-myo-inositol-5-phosphate) + phosphate. It catalyses the reaction 1,2-dihexadecanoyl-sn-glycero-3-phospho-(1D-myo-inositol-3,5-phosphate) + H2O = 1,2-dihexadecanoyl-sn-glycero-3-phospho-(1D-myo-inositol-5-phosphate) + phosphate. Its activity is regulated as follows. Allosterically activated by phosphatidylinositol 5-phosphate (PI5P). Functionally, lipid phosphatase which dephosphorylates phosphatidylinositol 3-monophosphate (PI3P) and phosphatidylinositol 3,5-bisphosphate (PI(3,5)P2). Has also been shown to dephosphorylate phosphotyrosine- and phosphoserine-containing peptides. Negatively regulates EGFR degradation through regulation of EGFR trafficking from the late endosome to the lysosome. Plays a role in vacuolar formation and morphology. Regulates desmin intermediate filament assembly and architecture. Plays a role in mitochondrial morphology and positioning. Required for skeletal muscle maintenance but not for myogenesis. In skeletal muscles, stabilizes MTMR12 protein levels. In Pongo abelii (Sumatran orangutan), this protein is Myotubularin.